The sequence spans 525 residues: Ribosomal protein uS12 methylthiotransferase RimO (525 aa).

Residues 1 to 20 (MPKISTESVNTTIAPSQPAS) show a composition bias toward polar residues. Residues 1 to 44 (MPKISTESVNTTIAPSQPASTAPKDTATLFNPAKPTATPAQSSI) form a disordered region. In terms of domain architecture, MTTase N-terminal spans 82-192 (PKIGFVSLGC…VIRAVALHVP (111 aa)). [4Fe-4S] cluster-binding residues include C91, C127, C156, C230, C234, and C237. The region spanning 216-453 (LTPSHYAYLK…MTLQQDISAQ (238 aa)) is the Radical SAM core domain. Residues 456-525 (QEKIGKTLMV…EYDLFASYQA (70 aa)) form the TRAM domain.

Belongs to the methylthiotransferase family. RimO subfamily. [4Fe-4S] cluster is required as a cofactor.

Its subcellular location is the cytoplasm. It carries out the reaction L-aspartate(89)-[ribosomal protein uS12]-hydrogen + (sulfur carrier)-SH + AH2 + 2 S-adenosyl-L-methionine = 3-methylsulfanyl-L-aspartate(89)-[ribosomal protein uS12]-hydrogen + (sulfur carrier)-H + 5'-deoxyadenosine + L-methionine + A + S-adenosyl-L-homocysteine + 2 H(+). Its function is as follows. Catalyzes the methylthiolation of an aspartic acid residue of ribosomal protein uS12. The polypeptide is Ribosomal protein uS12 methylthiotransferase RimO (Psychrobacter arcticus (strain DSM 17307 / VKM B-2377 / 273-4)).